Here is a 273-residue protein sequence, read N- to C-terminus: MALNSINTNSGALIALQNLNSTNAELTQVQQRINTGKKIGSAKDNGAIWATAKNQSATAGSMNAVKDSLQRGQSTIDVALAAGDTITDLLGKMKEKALAASDTSLNTASFNALKSDFDSLRDQITKAASNAKFNGVSIADGTTTKLSFLANSDGSAFTVTAKTLTLGGLGLTATSSFTTAAAAKTMIGTIDTALQTATNKLASLGTSSTGLDTHLTFVGKLQDSLDAGVGNLVDADLAKESAKLQSLQTKQQLGVQALSIANQSSSSILSLFR.

It belongs to the bacterial flagellin family. In C.crescentus, the flagellar filament is composed of multiple flagellins of 29 kDa; 27 kDa and 25 kDa.

It is found in the secreted. The protein resides in the bacterial flagellum. Flagellin is the subunit protein which polymerizes to form the filaments of bacterial flagella. The sequence is that of Flagellin FljM (fljM) from Caulobacter vibrioides (strain ATCC 19089 / CIP 103742 / CB 15) (Caulobacter crescentus).